Here is a 1758-residue protein sequence, read N- to C-terminus: Y' element ATP-dependent helicase YIL177C (1758 aa).

The 178-residue stretch at 668-845 folds into the Helicase ATP-binding domain; the sequence is EIYMADTPSV…LQRIGLTGLA (178 aa). Residue 681–688 participates in ATP binding; sequence APPGYGKT. Residues 900-1051 form the Helicase C-terminal domain; that stretch reads ALKLLLALFE…EFYGLESKKG (152 aa). The span at 1142 to 1360 shows a compositional bias: low complexity; sequence NVRTNATTNA…ATTTESTNAS (219 aa). Positions 1142 to 1384 are disordered; it reads NVRTNATTNA…RFHPVTDINK (243 aa). The segment covering 1361 to 1384 has biased composition (basic and acidic residues); the sequence is AKEDANKDGNAEDNRFHPVTDINK.

This sequence belongs to the helicase family. Yeast subtelomeric Y' repeat subfamily.

Catalyzes DNA unwinding and is involved in telomerase-independent telomere maintenance. The sequence is that of Y' element ATP-dependent helicase YIL177C from Saccharomyces cerevisiae (strain ATCC 204508 / S288c) (Baker's yeast).